Here is a 499-residue protein sequence, read N- to C-terminus: Pyruvate kinase (499 aa).

Arg-50 contributes to the substrate binding site. Residues Asn-52, Ser-54, Asp-84, and Thr-85 each contribute to the K(+) site. Residue 52–55 (NFSH) coordinates ATP. ATP is bound at residue Arg-91. Glu-241 contributes to the Mg(2+) binding site. Residues Gly-264, Asp-265, and Thr-297 each coordinate substrate. Residue Asp-265 participates in Mg(2+) binding.

This sequence belongs to the pyruvate kinase family. As to quaternary structure, homotetramer. The cofactor is Mg(2+). K(+) is required as a cofactor.

The enzyme catalyses pyruvate + ATP = phosphoenolpyruvate + ADP + H(+). The protein operates within carbohydrate degradation; glycolysis; pyruvate from D-glyceraldehyde 3-phosphate: step 5/5. Activated by fructose 2,6-bisphosphate, activated by the effector in a non cooperative manner. In Leishmania mexicana, this protein is Pyruvate kinase (PYK).